Here is a 151-residue protein sequence, read N- to C-terminus: UPF0178 protein mma_0312 (151 aa).

The protein belongs to the UPF0178 family.

This is UPF0178 protein mma_0312 from Janthinobacterium sp. (strain Marseille) (Minibacterium massiliensis).